Consider the following 254-residue polypeptide: Protein Thf1 (254 aa).

A coiled-coil region spans residues 182–241; sequence EEKMKKDLDLYRSNLEKMNQVLEVLEDALAVERQRREKAEAEAKAKTAEATVATETNDEQ. A compositionally biased stretch (basic and acidic residues) spans 215 to 228; the sequence is QRREKAEAEAKAKT. A disordered region spans residues 215–254; sequence QRREKAEAEAKAKTAEATVATETNDEQDEQKETSESGSDA.

The protein belongs to the THF1 family.

In terms of biological role, may be involved in photosynthetic membrane biogenesis. In Picosynechococcus sp. (strain ATCC 27264 / PCC 7002 / PR-6) (Agmenellum quadruplicatum), this protein is Protein Thf1.